Consider the following 201-residue polypeptide: Ribosomal RNA large subunit methyltransferase E (201 aa).

Residues Gly49, Trp51, Asp69, Asp87, and Asp111 each contribute to the S-adenosyl-L-methionine site. The Proton acceptor role is filled by Lys151.

The protein belongs to the class I-like SAM-binding methyltransferase superfamily. RNA methyltransferase RlmE family.

It localises to the cytoplasm. It carries out the reaction uridine(2552) in 23S rRNA + S-adenosyl-L-methionine = 2'-O-methyluridine(2552) in 23S rRNA + S-adenosyl-L-homocysteine + H(+). Its function is as follows. Specifically methylates the uridine in position 2552 of 23S rRNA at the 2'-O position of the ribose in the fully assembled 50S ribosomal subunit. In Nitratidesulfovibrio vulgaris (strain DSM 19637 / Miyazaki F) (Desulfovibrio vulgaris), this protein is Ribosomal RNA large subunit methyltransferase E.